Reading from the N-terminus, the 720-residue chain is NAD(+) hydrolase ApTIR (720 aa).

Positions 1–131 constitute a TIR domain; the sequence is MRYDAFISYS…AVPPALRGVF (131 aa). NAD(+) is bound by residues 10 to 11 and alanine 48; that span reads SH. The active site involves glutamate 84. The helical transmembrane segment at 192–211 threads the bilayer; the sequence is GALAVVCALLLLVAGTAVAW. Disordered stretches follow at residues 231–275 and 292–359; these read ATAA…AVAE and EGIA…EEAV. 2 stretches are compositionally biased toward basic and acidic residues: residues 256–268 and 307–359; these read EQQR…EEAR and AEAR…EEAV. The stretch at 313-362 forms a coiled coil; it reads RGVADAEKAKANRAAAEAERQRKIAADEQRKAHEAAAEAERQREEAVKQQ. WD repeat units lie at residues 420–459, 465–504, 510–549, 555–594, 600–639, 645–684, and 690–720; these read GHTA…APRR, SSTA…APRR, GHTD…APRR, DHTA…APRR, and GHTD…CCGM.

It is found in the cell membrane. The enzyme catalyses NAD(+) + H2O = ADP-D-ribose + nicotinamide + H(+). Its function is as follows. NAD(+) hydrolase (NADase) that catalyzes cleavage of NAD(+) into ADP-D-ribose (ADPR) and nicotinamide. This chain is NAD(+) hydrolase ApTIR, found in Actinoplanes sp. (strain ATCC 31044 / CBS 674.73 / SE50/110).